The following is a 476-amino-acid chain: Protein transport protein Sec61 subunit alpha isoform 2 (476 aa).

Residues 1–32 lie on the Cytoplasmic side of the membrane; the sequence is MGIKFLEVIKPFCAVLPEIQKPERKIQFREKV. The helical transmembrane segment at 33–53 threads the bilayer; that stretch reads LWTAITLFIFLVCCQIPLFGI. Over 54–75 the chain is Lumenal; that stretch reads MSSDSADPFYWMRVILASNRGT. A helical membrane pass occupies residues 76 to 96; the sequence is LMELGISPIVTSGLIMQLLAG. The Cytoplasmic portion of the chain corresponds to 97–117; it reads AKIIEVGDTPKDRALFNGAQK. The chain crosses the membrane as a helical span at residues 118–138; the sequence is LFGMIITIGQAIVYVMTGMYG. At 139 to 144 the chain is on the lumenal side; that stretch reads DPAEMG. A helical transmembrane segment spans residues 145-165; the sequence is AGICLLIIIQLFVAGLIVLLL. The Cytoplasmic segment spans residues 166 to 172; it reads DELLQKG. Residues 173 to 193 form a helical membrane-spanning segment; sequence YGLGSGISLFIATNICETIVW. The Lumenal portion of the chain corresponds to 194–240; sequence KASSPTTINTGRGTEFEGAVIALFHLLATRTDKVRALREAFYRQNLP. Residues 241-261 traverse the membrane as a helical segment; that stretch reads NLMNLIATVFVFAVVIYFQGF. Residues 262-288 lie on the Cytoplasmic side of the membrane; sequence RVDLPIKSARYRGQYSSYPIKLFYTSN. Residues 289-309 form a helical membrane-spanning segment; the sequence is IPIILQSALVSNLYVISQMLS. At 310-353 the chain is on the lumenal side; sequence VRFSGNFLVNLLGQWADVSGGGPARSYPVGGLCYYLSPPESMGA. A helical membrane pass occupies residues 354 to 374; that stretch reads ILEDPVHVVVYIIFMLGSCAF. The Cytoplasmic portion of the chain corresponds to 375–420; it reads FSKTWIEVSGSSAKDVAKQLKEQQMVMRGHRDTSMVHELNRYIPTA. 2 consecutive transmembrane segments (helical) span residues 421–441 and 442–462; these read AAFG…LGAI and GSGT…EIFV. Topologically, residues 463–476 are cytoplasmic; it reads KEQAEVGGMGALFF.

Belongs to the SecY/SEC61-alpha family. As to quaternary structure, the SEC61 channel-forming translocon complex consists of channel-forming core components SEC61A1, SEC61B and SEC61G and different auxiliary components such as SEC62 and SEC63.

The protein localises to the endoplasmic reticulum membrane. Functionally, component of SEC61 channel-forming translocon complex that mediates transport of signal peptide-containing precursor polypeptides across the endoplasmic reticulum (ER). Forms a ribosome receptor and a gated pore in the ER membrane, both functions required for cotranslational translocation of nascent polypeptides. The protein is Protein transport protein Sec61 subunit alpha isoform 2 (SEC61A2) of Pongo abelii (Sumatran orangutan).